A 137-amino-acid chain; its full sequence is Thioredoxin-like protein R548 (137 aa).

Positions 2–137 (SKDSVETNTI…LEKSIVESSQ (136 aa)) constitute a Thioredoxin domain. Residues cysteine 61 and cysteine 64 each act as nucleophile in the active site. Cysteine 61 and cysteine 64 form a disulfide bridge.

Belongs to the thioredoxin family.

Functionally, participates in various redox reactions through the reversible oxidation of its active center dithiol to a disulfide and catalyzes dithiol-disulfide exchange reactions. This is Thioredoxin-like protein R548 from Acanthamoeba polyphaga mimivirus (APMV).